Here is a 358-residue protein sequence, read N- to C-terminus: Insulin gene enhancer protein isl-2b (358 aa).

2 consecutive LIM zinc-binding domains span residues Cys-27–Asp-80 and Cys-89–His-143. The homeobox DNA-binding region spans Thr-191–Ser-250. Residues Glu-325–Ser-335 show a composition bias toward low complexity. The tract at residues Glu-325–Thr-358 is disordered. Residues Asp-336–Thr-358 are compositionally biased toward polar residues.

It is found in the nucleus. Binds to one of the cis-acting domain of the insulin gene enhancer. May be involved in the regional specification of the myotome and also in target recognition by the caudal primary neuron. In Danio rerio (Zebrafish), this protein is Insulin gene enhancer protein isl-2b (isl2b).